Here is a 564-residue protein sequence, read N- to C-terminus: 3beta-hydroxysteroid-dehydrogenase/decarboxylase isoform 2 (564 aa).

16–21 (GGRGFA) provides a ligand contact to NAD(+). N-linked (GlcNAc...) asparagine glycosylation is found at N146 and N158. NAD(+)-binding residues include Y161 and K165. Residue K165 is the Proton donor of the active site. Residues 384–564 (VADTLLWKDL…EKLFGSKKHD (181 aa)) form the Reticulon domain. 2 helical membrane-spanning segments follow: residues 398 to 418 (IAIF…STVV) and 424 to 444 (ALLV…KIFG). A glycan (N-linked (GlcNAc...) asparagine) is linked at N474. The next 2 helical transmembrane spans lie at 486 to 506 (GNDW…SLAG) and 507 to 527 (AISL…AFLV).

Belongs to the 3-beta-HSD family.

It is found in the endoplasmic reticulum membrane. It carries out the reaction a 3beta-hydroxysteroid-4alpha-carboxylate + NAD(+) = a 3-oxosteroid + CO2 + NADH. The enzyme catalyses 4alpha-carboxy-4beta,14alpha-dimethyl-9beta,19-cyclo-5alpha-ergost-24(24(1))-en-3beta-ol + NAD(+) = cycloeucalenone + CO2 + NADH. It participates in steroid biosynthesis; zymosterol biosynthesis; zymosterol from lanosterol: step 4/6. 3beta-hydroxysteroid-dehydrogenase/decarboxylase involved in sterol synthesis. Catalyzes the formation of 3-oxosteroids from 3beta-hydroxysteroids-4alpha-carboxylate. Involved in the regulation of inflorescence internodes and leaves growth, probably by affecting auxin transporter activity possibly by altering sterol composition in the membranes. This is 3beta-hydroxysteroid-dehydrogenase/decarboxylase isoform 2 from Arabidopsis thaliana (Mouse-ear cress).